A 208-amino-acid polypeptide reads, in one-letter code: Ubiquitin-conjugating enzyme E2 S (208 aa).

The region spanning 14–160 (QTIRQVMKEL…ARMMTEIHAQ (147 aa)) is the UBC core domain. Cysteine 98 acts as the Glycyl thioester intermediate in catalysis. A disordered region spans residues 161 to 193 (PAKCGAGASDAKDDDGPSTKKHAGLDKKLQDKK). Basic and acidic residues predominate over residues 170–193 (DAKDDDGPSTKKHAGLDKKLQDKK).

It belongs to the ubiquitin-conjugating enzyme family.

It catalyses the reaction S-ubiquitinyl-[E1 ubiquitin-activating enzyme]-L-cysteine + [E2 ubiquitin-conjugating enzyme]-L-cysteine = [E1 ubiquitin-activating enzyme]-L-cysteine + S-ubiquitinyl-[E2 ubiquitin-conjugating enzyme]-L-cysteine.. Its pathway is protein modification; protein ubiquitination. Catalyzes the covalent attachment of ubiquitin to other proteins. Acts as an essential factor of the anaphase promoting complex/cyclosome (APC/C), a cell cycle-regulated ubiquitin ligase that controls progression through mitosis. Acts by specifically elongating polyubiquitin chains initiated by the E2 enzyme vih/UbcH10 on APC/C substrates, enhancing the degradation of APC/C substrates by the proteasome and promoting mitotic exit. This is Ubiquitin-conjugating enzyme E2 S from Drosophila virilis (Fruit fly).